The chain runs to 40 residues: Subtilisin-like serine protease AS-E1 (40 aa).

One can recognise a Peptidase S8 domain in the interval 4–40 (PWGLARISHRTTGATSYVYDDSAGEGTCSYIIDTGIY). D36 functions as the Charge relay system in the catalytic mechanism.

The protein belongs to the peptidase S8 family. As to quaternary structure, homodimer.

With respect to regulation, strongly inhibited by antipain and PMSF. Inhibited by benzamidine and aprotinin by 80% and 17% respectively. Little or no inhibition by EDTA, E-64, iodoacetic acid, leupeptin and FUT-175. Its function is as follows. Subtilisin-like serine protease. Cleaves prothrombin at 155-Arg-|-Ser-156, 45-Thr-|-Ala-46 and 316-Tyr-|-Ile-317 to produce meizothrombin(desF1)-like molecules. Degrades fibrinogen. Inhibits plasma coagulation. The chain is Subtilisin-like serine protease AS-E1 from Acremonium sp.